The primary structure comprises 387 residues: Short-chain dehydrogenase/reductase family 42E member 1 (387 aa).

Tyr-149 (proton acceptor) is an active-site residue. Lys-153 is an NAD(+) binding site. 2 consecutive transmembrane segments (helical) span residues 279–299 (LPIS…FVVG) and 365–385 (ILDV…LPVV).

It belongs to the 3-beta-HSD family.

The protein localises to the membrane. This Danio rerio (Zebrafish) protein is Short-chain dehydrogenase/reductase family 42E member 1 (sdr42e1).